Consider the following 114-residue polypeptide: Cytochrome c oxidase subunit 4B (114 aa).

3 helical membrane-spanning segments follow: residues 29–49 (QIVV…AVAT), 56–76 (FAIP…LFFF), and 89–109 (AFMI…MLLL).

Belongs to the cytochrome c oxidase bacterial subunit 4 family.

Its subcellular location is the cell membrane. It catalyses the reaction 4 Fe(II)-[cytochrome c] + O2 + 8 H(+)(in) = 4 Fe(III)-[cytochrome c] + 2 H2O + 4 H(+)(out). The protein is Cytochrome c oxidase subunit 4B (ctaF) of Alkalihalophilus pseudofirmus (strain ATCC BAA-2126 / JCM 17055 / OF4) (Bacillus pseudofirmus).